A 748-amino-acid chain; its full sequence is Disintegrin and metalloproteinase domain-containing protein 10 (748 aa).

An N-terminal signal peptide occupies residues 1-19; it reads MVLLRVLILLLSWVAGLGG. Positions 20-213 are excised as a propeptide; it reads QYGNPLNKYI…NGPELLRKKR (194 aa). Residues 20–672 are Extracellular-facing; it reads QYGNPLNKYI…SPELYENIAE (653 aa). The short motif at 171-178 is the Cysteine switch element; that stretch reads GGCADHSV. Residue Cys173 coordinates Zn(2+). Positions 220–456 constitute a Peptidase M12B domain; that stretch reads NTCQLYIQTD…KRNNCFVESG (237 aa). 2 N-linked (GlcNAc...) asparagine glycosylation sites follow: Asn267 and Asn278. Intrachain disulfides connect Cys344–Cys451, Cys399–Cys435, Cys460–Cys495, Cys471–Cys484, Cys473–Cys479, Cys483–Cys515, Cys503–Cys511, Cys510–Cys536, Cys524–Cys543, Cys530–Cys562, Cys555–Cys567, Cys572–Cys598, Cys580–Cys607, Cys582–Cys597, Cys594–Cys639, and Cys632–Cys645. His383 contacts Zn(2+). Glu384 is an active-site residue. Residues His387 and His393 each contribute to the Zn(2+) site. A glycan (N-linked (GlcNAc...) asparagine) is linked at Asn439. The region spanning 457 to 551 is the Disintegrin domain; it reads QPICGNGMVE…LCPASDPKPN (95 aa). Asn551 is a glycosylation site (N-linked (GlcNAc...) asparagine). The helical transmembrane segment at 673–696 threads the bilayer; it reads WIVAYWWAVLLMGIALIMLMAGFI. Residues 697 to 748 are Cytoplasmic-facing; sequence KICSVHTPSSNPKLPPPKPLPGTLKRRRPPQPIQQPQRQRPRESYQMGHMRR. Positions 704-748 are disordered; that stretch reads PSSNPKLPPPKPLPGTLKRRRPPQPIQQPQRQRPRESYQMGHMRR. An SH3-binding motif is present at residues 708 to 715; that stretch reads PKLPPPKP. Position 719 is a phosphothreonine (Thr719). The short motif at 722–728 is the SH3-binding element; the sequence is RRRPPQP. The interaction with AP2A1, AP2A2 and AP2M1 stretch occupies residues 734–748; it reads RQRPRESYQMGHMRR.

In terms of assembly, forms a ternary EFNA5-EPHA3-ADAM10 complex mediating EFNA5 extracellular domain shedding by ADAM10 which regulates the EFNA5-EPHA3 complex internalization and function, the cleavage occurs in trans, with ADAM10 and its substrate being on the membranes of opposing cells. Interacts with the clathrin adapter AP2 complex subunits AP2A1, AP2A2, AP2B1, and AP2M1; this interaction facilitates ADAM10 endocytosis from the plasma membrane during long-term potentiation in hippocampal neurons. Forms a ternary complex composed of ADAM10, EPHA4 and CADH1; within the complex, ADAM10 cleaves CADH1 which disrupts adherens junctions. Interacts with EPHA2. Interacts with NGF in a divalent cation-dependent manner. Interacts with TSPAN14; the interaction promotes ADAM10 maturation and cell surface expression. Interacts with TSPAN5, TSPAN10, TSPAN14, TSPAN15, TSPAN17 and TSPAN33; these interactions regulate ADAM10 substrate specificity, endocytosis and turnover. Interacts (via extracellular domain) with TSPAN33 (via extracellular domain) and (via cytoplasmic domain) with AFDN; interaction with TSPAN33 allows the docking of ADAM10 to zonula adherens through a PDZ11-dependent interaction between TSPAN33 and PLEKHA7 while interaction with AFDN locks ADAM10 at zonula adherens. Interacts with DLG1; this interaction recruits ADAM10 to the cell membrane during long-term depression in hippocampal neurons. Interacts (via extracellular domain) with BACE1 (via extracellular domain). Interacts with FAM171A1. Zn(2+) is required as a cofactor. In terms of processing, the precursor is cleaved by furin and PCSK7. In terms of tissue distribution, expressed at low level in kidney, spleen, lung, adrenal, heart and peripheral nerve.

The protein resides in the golgi apparatus membrane. The protein localises to the cell membrane. Its subcellular location is the cytoplasmic vesicle. It is found in the clathrin-coated vesicle. It localises to the cell projection. The protein resides in the axon. The protein localises to the dendrite. Its subcellular location is the cell junction. It is found in the adherens junction. It localises to the cytoplasm. It carries out the reaction Endopeptidase of broad specificity.. Catalytically inactive when the propeptide is intact and associated with the mature enzyme. The disintegrin and cysteine-rich regions modulate access of substrates to exerts an inhibitory effect on the cleavage of ADAM10 substrates. Functionally, transmembrane metalloprotease which mediates the ectodomain shedding of a myriad of transmembrane proteins, including adhesion proteins, growth factor precursors and cytokines being essential for development and tissue homeostasis. Associates with six members of the tetraspanin superfamily TspanC8 which regulate its exit from the endoplasmic reticulum and its substrate selectivity. Cleaves the membrane-bound precursor of TNF-alpha at '76-Ala-|-Val-77' to its mature soluble form. Responsible for the proteolytical release of soluble JAM3 from endothelial cells surface. Responsible for the proteolytic release of several other cell-surface proteins, including heparin-binding epidermal growth-like factor, ephrin-A2, CD44, CDH2 and for constitutive and regulated alpha-secretase cleavage of amyloid precursor protein (APP). Contributes to the normal cleavage of the cellular prion protein. Involved in the cleavage of the adhesion molecule L1 at the cell surface and in released membrane vesicles, suggesting a vesicle-based protease activity. Also controls the proteolytic processing of Notch and mediates lateral inhibition during neurogenesis. Required for the development of type 1 transitional B cells into marginal zone B cells, probably by cleaving Notch. Responsible for the FasL ectodomain shedding and for the generation of the remnant ADAM10-processed FasL (FasL APL) transmembrane form. Also cleaves the ectodomain of the integral membrane proteins CORIN and ITM2B. Mediates the proteolytic cleavage of LAG3, leading to release the secreted form of LAG3. Mediates the proteolytic cleavage of IL6R and IL11RA, leading to the release of secreted forms of IL6R and IL11RA. Enhances the cleavage of CHL1 by BACE1. Cleaves NRCAM. Cleaves TREM2, resulting in shedding of the TREM2 ectodomain. Involved in the development and maturation of glomerular and coronary vasculature. During development of the cochlear organ of Corti, promotes pillar cell separation by forming a ternary complex with CADH1 and EPHA4 and cleaving CADH1 at adherens junctions. May regulate the EFNA5-EPHA3 signaling. Regulates leukocyte transmigration as a sheddase for the adherens junction protein VE-cadherin/CDH5 in endothelial cells. The chain is Disintegrin and metalloproteinase domain-containing protein 10 (ADAM10) from Bos taurus (Bovine).